Here is a 180-residue protein sequence, read N- to C-terminus: Acireductone dioxygenase (180 aa).

Positions 97, 99, 103, and 141 each coordinate Fe(2+). His-97, His-99, Glu-103, and His-141 together coordinate Ni(2+).

The protein belongs to the acireductone dioxygenase (ARD) family. Monomer. It depends on Fe(2+) as a cofactor. Ni(2+) is required as a cofactor.

It catalyses the reaction 1,2-dihydroxy-5-(methylsulfanyl)pent-1-en-3-one + O2 = 3-(methylsulfanyl)propanoate + CO + formate + 2 H(+). It carries out the reaction 1,2-dihydroxy-5-(methylsulfanyl)pent-1-en-3-one + O2 = 4-methylsulfanyl-2-oxobutanoate + formate + 2 H(+). The protein operates within amino-acid biosynthesis; L-methionine biosynthesis via salvage pathway; L-methionine from S-methyl-5-thio-alpha-D-ribose 1-phosphate: step 5/6. In terms of biological role, catalyzes 2 different reactions between oxygen and the acireductone 1,2-dihydroxy-3-keto-5-methylthiopentene (DHK-MTPene) depending upon the metal bound in the active site. Fe-containing acireductone dioxygenase (Fe-ARD) produces formate and 2-keto-4-methylthiobutyrate (KMTB), the alpha-ketoacid precursor of methionine in the methionine recycle pathway. Ni-containing acireductone dioxygenase (Ni-ARD) produces methylthiopropionate, carbon monoxide and formate, and does not lie on the methionine recycle pathway. This chain is Acireductone dioxygenase, found in Yersinia enterocolitica serotype O:8 / biotype 1B (strain NCTC 13174 / 8081).